Here is a 497-residue protein sequence, read N- to C-terminus: Serine hydroxymethyltransferase (497 aa).

Residues L176 and 180–182 (GHL) contribute to the (6S)-5,6,7,8-tetrahydrofolate site. K289 is modified (N6-(pyridoxal phosphate)lysine).

Belongs to the SHMT family. In terms of assembly, homodimer. Pyridoxal 5'-phosphate is required as a cofactor.

It is found in the cytoplasm. It catalyses the reaction (6R)-5,10-methylene-5,6,7,8-tetrahydrofolate + glycine + H2O = (6S)-5,6,7,8-tetrahydrofolate + L-serine. The protein operates within one-carbon metabolism; tetrahydrofolate interconversion. It functions in the pathway amino-acid biosynthesis; glycine biosynthesis; glycine from L-serine: step 1/1. Catalyzes the reversible interconversion of serine and glycine with tetrahydrofolate (THF) serving as the one-carbon carrier. This reaction serves as the major source of one-carbon groups required for the biosynthesis of purines, thymidylate, methionine, and other important biomolecules. Also exhibits THF-independent aldolase activity toward beta-hydroxyamino acids, producing glycine and aldehydes, via a retro-aldol mechanism. This Chlamydia muridarum (strain MoPn / Nigg) protein is Serine hydroxymethyltransferase.